The primary structure comprises 320 residues: MKDTTVPLTLISLLADGEFHSGEQLGERLGMSRAAINKHIQTLRDWGVDVFTVPGKGYSLPEPIQLLDADRIHSQLDSGNVAVLPVIDSTNQYLLDRIGELRSGDACVAEYQQAGRGRRGRKWFSPFGANLYLSMYWRLEQGPAAAIGLSLVIGIVMAEVLRKLGADKVRVKWPNDLYLLDRKLAGILVELTGKTGDAAQIVIGAGINMAMRRVEEDVINQGWITLQEAGITLDRNMLAAKLIYKLRAALELFEQEGLSPYLSRWKKLDNFIDRPVKLIIGDKEIFGISRGIDTQGALLLEQDGVIKPWMGGEISLRSAE.

The H-T-H motif DNA-binding region spans 22–41; sequence GEQLGERLGMSRAAINKHIQ. The BPL/LPL catalytic domain occupies 66-254; it reads LLDADRIHSQ…KLRAALELFE (189 aa). Residues 89-91, Q112, 116-118, and K183 contribute to the biotin site; these read STN and RGR.

This sequence belongs to the biotin--protein ligase family.

The catalysed reaction is biotin + L-lysyl-[protein] + ATP = N(6)-biotinyl-L-lysyl-[protein] + AMP + diphosphate + H(+). Functionally, acts both as a biotin--[acetyl-CoA-carboxylase] ligase and a biotin-operon repressor. In the presence of ATP, BirA activates biotin to form the BirA-biotinyl-5'-adenylate (BirA-bio-5'-AMP or holoBirA) complex. HoloBirA can either transfer the biotinyl moiety to the biotin carboxyl carrier protein (BCCP) subunit of acetyl-CoA carboxylase, or bind to the biotin operator site and inhibit transcription of the operon. The protein is Bifunctional ligase/repressor BirA of Salmonella typhimurium (strain LT2 / SGSC1412 / ATCC 700720).